The primary structure comprises 233 residues: Cell surface glycoprotein gp42 (233 aa).

The signal sequence occupies residues 1–16 (MLLWMVLLLCVSMTEA). 2 Ig-like domains span residues 23-98 (PVLS…GTIQ) and 115-195 (PVLT…RDIS). Residues Asn29, Asn66, and Asn181 are each glycosylated (N-linked (GlcNAc...) asparagine). 2 disulfides stabilise this stretch: Cys40–Cys88 and Cys136–Cys184. Residue Gly206 is the site of GPI-anchor amidated glycine attachment. Residues 207–233 (TASMKSTTVVIWLPVSCLVGWPWLLRF) constitute a propeptide, removed in mature form.

As to expression, NK cells.

Its subcellular location is the cell membrane. This is Cell surface glycoprotein gp42 from Rattus norvegicus (Rat).